We begin with the raw amino-acid sequence, 463 residues long: A-type ATP synthase subunit B (463 aa).

This sequence belongs to the ATPase alpha/beta chains family. In terms of assembly, has multiple subunits with at least A(3), B(3), C, D, E, F, H, I and proteolipid K(x).

The protein resides in the cell membrane. Functionally, component of the A-type ATP synthase that produces ATP from ADP in the presence of a proton gradient across the membrane. The B chain is a regulatory subunit. The protein is A-type ATP synthase subunit B of Methanothermobacter thermautotrophicus (strain ATCC 29096 / DSM 1053 / JCM 10044 / NBRC 100330 / Delta H) (Methanobacterium thermoautotrophicum).